The primary structure comprises 652 residues: Phosphomethylpyrimidine synthase (652 aa).

2 disordered regions span residues 1–45 and 118–166; these read MVSR…SVSA and QRGD…LDGR. A compositionally biased stretch (low complexity) spans 8 to 45; the sequence is SSSSTSKAVTSSPSTSSLSSAASSPSVSSSSSSSSVSA. Residues 134–162 are compositionally biased toward gly residues; the sequence is GASGPGTLGSGTPGSGTPGSGPLGLGGTD. Substrate is bound by residues asparagine 245, methionine 274, tyrosine 303, histidine 339, 359-361, 400-403, and glutamate 439; these read SRG and DGLR. Histidine 443 contacts Zn(2+). Tyrosine 466 contributes to the substrate binding site. Histidine 507 contacts Zn(2+). Residues cysteine 587, cysteine 590, and cysteine 595 each coordinate [4Fe-4S] cluster.

Belongs to the ThiC family. It depends on [4Fe-4S] cluster as a cofactor.

The enzyme catalyses 5-amino-1-(5-phospho-beta-D-ribosyl)imidazole + S-adenosyl-L-methionine = 4-amino-2-methyl-5-(phosphooxymethyl)pyrimidine + CO + 5'-deoxyadenosine + formate + L-methionine + 3 H(+). It functions in the pathway cofactor biosynthesis; thiamine diphosphate biosynthesis. In terms of biological role, catalyzes the synthesis of the hydroxymethylpyrimidine phosphate (HMP-P) moiety of thiamine from aminoimidazole ribotide (AIR) in a radical S-adenosyl-L-methionine (SAM)-dependent reaction. The chain is Phosphomethylpyrimidine synthase from Frankia casuarinae (strain DSM 45818 / CECT 9043 / HFP020203 / CcI3).